We begin with the raw amino-acid sequence, 328 residues long: Methionyl-tRNA formyltransferase (328 aa).

Residue 110-113 participates in (6S)-5,6,7,8-tetrahydrofolate binding; sequence SLLP.

Belongs to the Fmt family.

The catalysed reaction is L-methionyl-tRNA(fMet) + (6R)-10-formyltetrahydrofolate = N-formyl-L-methionyl-tRNA(fMet) + (6S)-5,6,7,8-tetrahydrofolate + H(+). Its function is as follows. Attaches a formyl group to the free amino group of methionyl-tRNA(fMet). The formyl group appears to play a dual role in the initiator identity of N-formylmethionyl-tRNA by promoting its recognition by IF2 and preventing the misappropriation of this tRNA by the elongation apparatus. This is Methionyl-tRNA formyltransferase from Prochlorococcus marinus subsp. pastoris (strain CCMP1986 / NIES-2087 / MED4).